The primary structure comprises 616 residues: Xaa-Pro aminopeptidase app-1 (616 aa).

A peptide contacts are provided by Arg78 and His392. Zn(2+) is bound by residues Asp413, Asp424, and His487. A peptide is bound by residues His487, His496, and Glu522. Positions 522 and 536 each coordinate Zn(2+).

The protein belongs to the peptidase M24B family. In terms of assembly, homodimer. May interact with pid-2, pid-4 and pid-5. Zn(2+) is required as a cofactor. As to expression, specifically expressed in the intestine.

The protein localises to the cytoplasm. It catalyses the reaction Release of any N-terminal amino acid, including proline, that is linked to proline, even from a dipeptide or tripeptide.. Strongly inhibited by the metal ion chelators EDTA and 1,10-phenanthroline. Also inhibited by apstatin. Activity towards bradykinin is inhibited by Mn(2+) and Zn(2+) at all concentrations tested, whereas Co(2+) is inhibitory at concentrations above 100 uM and activatory at 10 uM. Catalyzes the removal of a penultimate prolyl residue from the N-termini of peptides, such as Arg-Pro-Pro. Has activity towards the flp-9 neuropeptide KPSFVRF-amide. The sequence is that of Xaa-Pro aminopeptidase app-1 from Caenorhabditis elegans.